The chain runs to 202 residues: Glycerol-3-phosphate acyltransferase (202 aa).

Transmembrane regions (helical) follow at residues 2–22 (ANLLFALAAYLIGSVSFAVVV), 85–105 (LAMVALAVFLGHLFPVFHRFA), 119–139 (AINPILGLATLATWVIIAFFF), and 158–178 (VLMEGIDAMAGAVLIIAILLI).

This sequence belongs to the PlsY family. In terms of assembly, probably interacts with PlsX.

It is found in the cell inner membrane. It carries out the reaction an acyl phosphate + sn-glycerol 3-phosphate = a 1-acyl-sn-glycero-3-phosphate + phosphate. The protein operates within lipid metabolism; phospholipid metabolism. Its function is as follows. Catalyzes the transfer of an acyl group from acyl-phosphate (acyl-PO(4)) to glycerol-3-phosphate (G3P) to form lysophosphatidic acid (LPA). This enzyme utilizes acyl-phosphate as fatty acyl donor, but not acyl-CoA or acyl-ACP. The protein is Glycerol-3-phosphate acyltransferase of Cupriavidus pinatubonensis (strain JMP 134 / LMG 1197) (Cupriavidus necator (strain JMP 134)).